The primary structure comprises 356 residues: Nicotinate-nucleotide--dimethylbenzimidazole phosphoribosyltransferase (356 aa).

Glutamate 317 acts as the Proton acceptor in catalysis.

The protein belongs to the CobT family. In terms of assembly, homodimer.

The enzyme catalyses 5,6-dimethylbenzimidazole + nicotinate beta-D-ribonucleotide = alpha-ribazole 5'-phosphate + nicotinate + H(+). Its pathway is nucleoside biosynthesis; alpha-ribazole biosynthesis; alpha-ribazole from 5,6-dimethylbenzimidazole: step 1/2. Functionally, catalyzes the synthesis of alpha-ribazole-5'-phosphate from nicotinate mononucleotide (NAMN) and 5,6-dimethylbenzimidazole (DMB). The sequence is that of Nicotinate-nucleotide--dimethylbenzimidazole phosphoribosyltransferase from Salmonella gallinarum (strain 287/91 / NCTC 13346).